The sequence spans 443 residues: uncharacterized protein (443 aa).

This is an uncharacterized protein from Mycoplasma genitalium (strain ATCC 33530 / DSM 19775 / NCTC 10195 / G37) (Mycoplasmoides genitalium).